Reading from the N-terminus, the 574-residue chain is Putative ABC transporter ATP-binding protein VVA0347 (574 aa).

ABC transporter domains are found at residues 3-244 (IEFS…GIRE) and 299-533 (LDVR…ANLT). ATP-binding positions include 37–44 (GPSGSGKS) and 332–339 (GKNGSGKS).

It belongs to the ABC transporter superfamily.

The protein localises to the cell inner membrane. Probably part of an ABC transporter complex. Responsible for energy coupling to the transport system. The chain is Putative ABC transporter ATP-binding protein VVA0347 from Vibrio vulnificus (strain YJ016).